Reading from the N-terminus, the 257-residue chain is Deoxyribose-phosphate aldolase (257 aa).

Asp-102 acts as the Proton donor/acceptor in catalysis. The active-site Schiff-base intermediate with acetaldehyde is the Lys-166. Residue Lys-198 is the Proton donor/acceptor of the active site.

The protein belongs to the DeoC/FbaB aldolase family. DeoC type 2 subfamily.

The protein resides in the cytoplasm. The catalysed reaction is 2-deoxy-D-ribose 5-phosphate = D-glyceraldehyde 3-phosphate + acetaldehyde. Its pathway is carbohydrate degradation; 2-deoxy-D-ribose 1-phosphate degradation; D-glyceraldehyde 3-phosphate and acetaldehyde from 2-deoxy-alpha-D-ribose 1-phosphate: step 2/2. Functionally, catalyzes a reversible aldol reaction between acetaldehyde and D-glyceraldehyde 3-phosphate to generate 2-deoxy-D-ribose 5-phosphate. The sequence is that of Deoxyribose-phosphate aldolase from Shewanella loihica (strain ATCC BAA-1088 / PV-4).